Here is a 372-residue protein sequence, read N- to C-terminus: uncharacterized protein (372 aa).

The N-terminal stretch at Met1–Gly33 is a signal peptide.

To K.pneumoniae RomA.

This is an uncharacterized protein from Mycobacterium bovis (strain ATCC BAA-935 / AF2122/97).